Reading from the N-terminus, the 557-residue chain is Probable protein kinase UbiB (557 aa).

Residues 121-509 enclose the Protein kinase domain; sequence SFDTVPLASA…RKLQTRVVTA (389 aa). Residues 127 to 135 and Lys-154 each bind ATP; that span reads LASASIAQV. The Proton acceptor role is filled by Asp-289. Helical transmembrane passes span 506-526 and 535-555; these read VVTA…YGLH and VPVW…VAWL.

The protein belongs to the ABC1 family. UbiB subfamily.

Its subcellular location is the cell inner membrane. The protein operates within cofactor biosynthesis; ubiquinone biosynthesis [regulation]. In terms of biological role, is probably a protein kinase regulator of UbiI activity which is involved in aerobic coenzyme Q (ubiquinone) biosynthesis. The polypeptide is Probable protein kinase UbiB (Xanthomonas oryzae pv. oryzae (strain MAFF 311018)).